The primary structure comprises 542 residues: MSIEIEAELQTAVDKRRNFAIISHPDAGKTTLTEKLLLYGGAIQEAGAVKAKRAQRHATSDWMAMEQQRGISITSTVLQFDYQNCQINLLDTPGHQDFSEDTYRTLAAADNAVMLEDSAKGLEPQTRKLFEVCKMRKLPIFTFINKMDRPGREPLELLDEIEQELGLKTYPVNWPIGMGDRFKGVFDRRKEQIHLFERSIHGRKAAVNTVVNLGDPQIEKLLDQDLYYQLKEDLELLDELGSALDLEQIHTGEMTPVFFGSAMTNFGVQLFLDAFLEYALKPGIHKSTVGEVSPTYPNFTGFVFKLQANMDPKHRDRVAFIRVCTGKFEKDMTVSHARTGKTVRLSRPQKLFAQDRASIENAYPGDIIGLNNPGVFAIGDTIYNGKKIEYEGIPCFSPEIFAYLRNPNPSKFKQFRKGVNELREEGAVQIMYSADEAKRDPILAAVGQLQLEVVQFRMQNEYGVETRVEMLPFTVARWVDGGWEILQKVGRLFNTVAVKDSWGRPVLLFKNQWNCQQVESEHPELKLNNTAPVVSGQEPESL.

Residues 14-283 (DKRRNFAIIS…AFLEYALKPG (270 aa)) enclose the tr-type G domain. GTP contacts are provided by residues 23–30 (SHPDAGKT), 91–95 (DTPGH), and 145–148 (NKMD).

Belongs to the TRAFAC class translation factor GTPase superfamily. Classic translation factor GTPase family. PrfC subfamily.

It localises to the cytoplasm. Increases the formation of ribosomal termination complexes and stimulates activities of RF-1 and RF-2. It binds guanine nucleotides and has strong preference for UGA stop codons. It may interact directly with the ribosome. The stimulation of RF-1 and RF-2 is significantly reduced by GTP and GDP, but not by GMP. The sequence is that of Peptide chain release factor 3 from Trichodesmium erythraeum (strain IMS101).